Reading from the N-terminus, the 504-residue chain is Fumitremorgin C monooxygenase (504 aa).

A helical transmembrane segment spans residues 9 to 29; the sequence is LPYPGVVGASLLVILGIILLF. Residue Cys442 coordinates heme.

This sequence belongs to the cytochrome P450 family. The cofactor is heme.

The protein localises to the membrane. The catalysed reaction is fumitremorgin C + 2 reduced [NADPH--hemoprotein reductase] + 2 O2 = 12alpha,13alpha-dihydroxyfumitremorgin C + 2 oxidized [NADPH--hemoprotein reductase] + 2 H2O + 2 H(+). It functions in the pathway mycotoxin biosynthesis. Cytochrome P450 monooxygenase; part of the gene cluster that mediates the biosynthesis of fumitremorgins, indole alkaloids that carry not only intriguing chemical structures, but also interesting biological and pharmacological activities. The biosynthesis of fumitremorgin-type alkaloids begins by condensation of the two amino acids L-tryptophan and L-proline to brevianamide F, catalyzed by the non-ribosomal peptide synthetase ftmPS/ftmA. Brevianamide F is then prenylated by the prenyltransferase ftmPT1/ftmB in the presence of dimethylallyl diphosphate, resulting in the formation of tryprostatin B. The three cytochrome P450 monooxygenases, ftmP450-1/ftmC, ftmP450-2/ftmE and ftmP450-3/FtmG, are responsible for the conversion of tryprostatin B to 6-hydroxytryprostatin B, tryprostatin A to fumitremorgin C and fumitremorgin C to 12,13-dihydroxyfumitremorgin C, respectively. The putative methyltransferase ftmMT/ftmD is expected for the conversion of 6-hydroxytryprostatin B to tryprostatin A. FtmPT2/FtmH catalyzes the prenylation of 12,13-dihydroxyfumitre-morgin C in the presence of dimethylallyl diphosphate, resulting in the formation of fumitremorgin B. Fumitremorgin B is further converted to verruculogen by ftmOx1/ftmF via the insertion of an endoperoxide bond between the two prenyl moieties. Finally, verruculogen is further converted to fumitremorgin A by the verruculogen prenyltransferase ftmPT3. This is Fumitremorgin C monooxygenase from Neosartorya fischeri (strain ATCC 1020 / DSM 3700 / CBS 544.65 / FGSC A1164 / JCM 1740 / NRRL 181 / WB 181) (Aspergillus fischerianus).